The following is a 116-amino-acid chain: Large ribosomal subunit protein uL18 (116 aa).

It belongs to the universal ribosomal protein uL18 family. In terms of assembly, part of the 50S ribosomal subunit; part of the 5S rRNA/L5/L18/L25 subcomplex. Contacts the 5S and 23S rRNAs.

Its function is as follows. This is one of the proteins that bind and probably mediate the attachment of the 5S RNA into the large ribosomal subunit, where it forms part of the central protuberance. In Psychrobacter arcticus (strain DSM 17307 / VKM B-2377 / 273-4), this protein is Large ribosomal subunit protein uL18.